The chain runs to 148 residues: Transcription antitermination protein NusB (148 aa).

It belongs to the NusB family.

In terms of biological role, involved in transcription antitermination. Required for transcription of ribosomal RNA (rRNA) genes. Binds specifically to the boxA antiterminator sequence of the ribosomal RNA (rrn) operons. The sequence is that of Transcription antitermination protein NusB from Novosphingobium aromaticivorans (strain ATCC 700278 / DSM 12444 / CCUG 56034 / CIP 105152 / NBRC 16084 / F199).